The following is a 301-amino-acid chain: Ornithine carbamoyltransferase (301 aa).

Residues Ser-46 to Thr-49, Gln-73, Arg-97, and His-124 to Gln-127 each bind carbamoyl phosphate. Residues Asn-154, Asp-218, and Ser-222–Met-223 each bind L-ornithine. Carbamoyl phosphate is bound by residues Cys-258–Leu-259 and Arg-286.

Belongs to the aspartate/ornithine carbamoyltransferase superfamily. OTCase family.

It is found in the cytoplasm. The catalysed reaction is carbamoyl phosphate + L-ornithine = L-citrulline + phosphate + H(+). It functions in the pathway amino-acid biosynthesis; L-arginine biosynthesis; L-arginine from L-ornithine and carbamoyl phosphate: step 1/3. Functionally, reversibly catalyzes the transfer of the carbamoyl group from carbamoyl phosphate (CP) to the N(epsilon) atom of ornithine (ORN) to produce L-citrulline. This chain is Ornithine carbamoyltransferase (argF), found in Methanothermobacter thermautotrophicus (strain ATCC 29096 / DSM 1053 / JCM 10044 / NBRC 100330 / Delta H) (Methanobacterium thermoautotrophicum).